The sequence spans 210 residues: Holliday junction branch migration complex subunit RuvA (210 aa).

The tract at residues 1–70 is domain I; sequence MISYLKGNPI…DEQPILYGFA (70 aa). The tract at residues 71–149 is domain II; the sequence is TAAERELFRQ…QWRKLVGITL (79 aa). The interval 150–160 is flexible linker; that stretch reads PSTSAIPSLEV. The domain III stretch occupies residues 160–210; sequence VLEDVEMTLLALGYTNEEINKAISTLSQDNQMLKNTNSEEWIREAIAWLSQ.

The protein belongs to the RuvA family. Homotetramer. Forms an RuvA(8)-RuvB(12)-Holliday junction (HJ) complex. HJ DNA is sandwiched between 2 RuvA tetramers; dsDNA enters through RuvA and exits via RuvB. An RuvB hexamer assembles on each DNA strand where it exits the tetramer. Each RuvB hexamer is contacted by two RuvA subunits (via domain III) on 2 adjacent RuvB subunits; this complex drives branch migration. In the full resolvosome a probable DNA-RuvA(4)-RuvB(12)-RuvC(2) complex forms which resolves the HJ.

The protein localises to the cytoplasm. The RuvA-RuvB-RuvC complex processes Holliday junction (HJ) DNA during genetic recombination and DNA repair, while the RuvA-RuvB complex plays an important role in the rescue of blocked DNA replication forks via replication fork reversal (RFR). RuvA specifically binds to HJ cruciform DNA, conferring on it an open structure. The RuvB hexamer acts as an ATP-dependent pump, pulling dsDNA into and through the RuvAB complex. HJ branch migration allows RuvC to scan DNA until it finds its consensus sequence, where it cleaves and resolves the cruciform DNA. This chain is Holliday junction branch migration complex subunit RuvA, found in Rippkaea orientalis (strain PCC 8801 / RF-1) (Cyanothece sp. (strain PCC 8801)).